The sequence spans 368 residues: Chaperone protein DnaJ (368 aa).

The J domain occupies 5-69 (DYYEVLGLSQ…QKRAQYDQFG (65 aa)). The segment at 130–212 (GKELNVEIPV…CHGSGKVRKR (83 aa)) adopts a CR-type zinc-finger fold. Positions 143, 146, 160, 163, 186, 189, 200, and 203 each coordinate Zn(2+). CXXCXGXG motif repeat units lie at residues 143–150 (CDTCKGSG), 160–167 (CKHCSGSG), 186–193 (CGHCSGTG), and 200–207 (CTTCHGSG).

Belongs to the DnaJ family. In terms of assembly, homodimer. Zn(2+) serves as cofactor.

The protein localises to the cytoplasm. Participates actively in the response to hyperosmotic and heat shock by preventing the aggregation of stress-denatured proteins and by disaggregating proteins, also in an autonomous, DnaK-independent fashion. Unfolded proteins bind initially to DnaJ; upon interaction with the DnaJ-bound protein, DnaK hydrolyzes its bound ATP, resulting in the formation of a stable complex. GrpE releases ADP from DnaK; ATP binding to DnaK triggers the release of the substrate protein, thus completing the reaction cycle. Several rounds of ATP-dependent interactions between DnaJ, DnaK and GrpE are required for fully efficient folding. Also involved, together with DnaK and GrpE, in the DNA replication of plasmids through activation of initiation proteins. The polypeptide is Chaperone protein DnaJ (Bacillus mycoides (strain KBAB4) (Bacillus weihenstephanensis)).